Consider the following 393-residue polypeptide: Seven-bladed beta-propeller protein Rv1057 (393 aa).

Residues 208–230 (DGGRIGSRSRSRQKSSKPRGNQA) are disordered. Positions 214–224 (SRSRSRQKSSK) are enriched in basic residues.

In terms of biological role, may play an important role in host-pathogen interactions and in ESAT-6 secretion. This Mycobacterium tuberculosis (strain ATCC 25618 / H37Rv) protein is Seven-bladed beta-propeller protein Rv1057.